The primary structure comprises 347 residues: Probable G-protein coupled receptor 148 (347 aa).

Over 1 to 51 (MGDELAPCPVGTTAWPALIQLISKTPCMPQAASNTSLGLGDLRVPSSMLYW) the chain is Extracellular. N-linked (GlcNAc...) asparagine glycosylation is present at Asn-34. A helical membrane pass occupies residues 52–72 (LFLPSSLLAAATLAVSPLLLV). Topologically, residues 73 to 85 (TILRNQRLRQEPH) are cytoplasmic. A helical membrane pass occupies residues 86-106 (YLLPANILLSDLAYILLHMLI). The Extracellular portion of the chain corresponds to 107 to 130 (SSSSLGGWELGRMACGILTDAVFA). Residues 131 to 151 (ACTSTILSFTAIVLHTYLAVI) traverse the membrane as a helical segment. At 152–165 (HPLRYLSFMSHGAA) the chain is on the cytoplasmic side. The helical transmembrane segment at 166–186 (WKAVALIWLVACCFPTFLIWL) threads the bilayer. The Extracellular portion of the chain corresponds to 187-214 (SKWQDAQLEEQGASYILPPSMGTQPGCG). A helical transmembrane segment spans residues 215-235 (LLVIVTYTSILCVLFLCTALI). Residues 236–261 (ANCFWRIYAEAKTSGIWGQGYSRARG) lie on the Cytoplasmic side of the membrane. The chain crosses the membrane as a helical span at residues 262–282 (TLLIHSVLITLYVSTGVVFSL). Over 283–299 (DMVLTRYHHIDSGTHTW) the chain is Extracellular. The chain crosses the membrane as a helical span at residues 300–322 (LLAANSEVLMMLPRAMLTYLYLL). Over 323 to 347 (RYRQLLGMVRGHLPSRRHQAIFTIS) the chain is Cytoplasmic.

It belongs to the G-protein coupled receptor 1 family. As to expression, expression restricted to nervous system and testis. Is also detected in several tumors types, most notably prostate cancer.

It is found in the cell membrane. Orphan receptor. The chain is Probable G-protein coupled receptor 148 (GPR148) from Homo sapiens (Human).